A 22-amino-acid polypeptide reads, in one-letter code: Melittin-like peptide (22 aa).

Residue Q22 is modified to Glutamine amide.

Expressed by the skin dorsal glands.

The protein localises to the secreted. This is Melittin-like peptide from Rana temporaria (European common frog).